The sequence spans 262 residues: Indole-3-glycerol phosphate synthase (262 aa).

This sequence belongs to the TrpC family.

The enzyme catalyses 1-(2-carboxyphenylamino)-1-deoxy-D-ribulose 5-phosphate + H(+) = (1S,2R)-1-C-(indol-3-yl)glycerol 3-phosphate + CO2 + H2O. Its pathway is amino-acid biosynthesis; L-tryptophan biosynthesis; L-tryptophan from chorismate: step 4/5. This Nitratiruptor sp. (strain SB155-2) protein is Indole-3-glycerol phosphate synthase.